Consider the following 299-residue polypeptide: NADH-cytochrome b5 reductase 2 (299 aa).

Residues 13–35 form a helical membrane-spanning segment; sequence SFKVLAPFAAAVGSVGIAYQYST. In terms of domain architecture, FAD-binding FR-type spans 50 to 154; that stretch reads DEWIDLKLAK…KGPVVKWKWE (105 aa). An FAD-binding site is contributed by 157–192; it reads QYKSIALIGGGTGITPLYQLMHEITKNPEDKTKVNL.

The protein belongs to the flavoprotein pyridine nucleotide cytochrome reductase family. Requires FAD as cofactor.

The protein resides in the mitochondrion outer membrane. It carries out the reaction 2 Fe(III)-[cytochrome b5] + NADH = 2 Fe(II)-[cytochrome b5] + NAD(+) + H(+). May mediate the reduction of outer membrane cytochrome b5. This chain is NADH-cytochrome b5 reductase 2 (MCR1), found in Debaryomyces hansenii (strain ATCC 36239 / CBS 767 / BCRC 21394 / JCM 1990 / NBRC 0083 / IGC 2968) (Yeast).